The primary structure comprises 624 residues: Phosphomethylpyrimidine synthase (624 aa).

The disordered stretch occupies residues 75 to 99 (SPWIESRGDTESYTGRTPFALDDGL). Residues asparagine 226, methionine 255, tyrosine 284, histidine 320, 340–342 (SRG), 381–384 (DGLR), and glutamate 420 each bind substrate. Histidine 424 is a Zn(2+) binding site. Tyrosine 447 serves as a coordination point for substrate. Histidine 488 provides a ligand contact to Zn(2+). [4Fe-4S] cluster contacts are provided by cysteine 568, cysteine 571, and cysteine 576.

It belongs to the ThiC family. In terms of assembly, homodimer. [4Fe-4S] cluster serves as cofactor.

It carries out the reaction 5-amino-1-(5-phospho-beta-D-ribosyl)imidazole + S-adenosyl-L-methionine = 4-amino-2-methyl-5-(phosphooxymethyl)pyrimidine + CO + 5'-deoxyadenosine + formate + L-methionine + 3 H(+). It participates in cofactor biosynthesis; thiamine diphosphate biosynthesis. In terms of biological role, catalyzes the synthesis of the hydroxymethylpyrimidine phosphate (HMP-P) moiety of thiamine from aminoimidazole ribotide (AIR) in a radical S-adenosyl-L-methionine (SAM)-dependent reaction. The protein is Phosphomethylpyrimidine synthase of Albidiferax ferrireducens (strain ATCC BAA-621 / DSM 15236 / T118) (Rhodoferax ferrireducens).